The chain runs to 851 residues: ATP-dependent DNA helicase DDX31 (851 aa).

The segment at 1 to 196 (MAPDLASQRH…STSDRNQEER (196 aa)) is disordered. The Q motif signature appears at 230–259 (AAFHELGLHPHLISTINTVLKMSSMTSVQK). A Helicase ATP-binding domain is found at 262 to 443 (IPVLLEGRDA…DISLHDPVSI (182 aa)). Position 275-282 (275-282 (SQTGSGKT)) interacts with ATP. The DEAD box motif lies at 388–391 (DEAD). One can recognise a Helicase C-terminal domain in the interval 480–659 (SLKQHVTVVP…VSEIKMEDIL (180 aa)). 2 disordered regions span residues 762 to 784 (KKRK…HSLA) and 804 to 851 (KQNA…SQKV). Arg828 is subject to Omega-N-methylarginine. The span at 841–851 (VQRDSKTSQKV) shows a compositional bias: basic and acidic residues.

The protein belongs to the DEAD box helicase family. DDX31/DBP7 subfamily. Interacts with NPM1; this interaction prevents interaction between NPM1 and HDM2. In terms of tissue distribution, weakly or undetectably expressed in normal organs. Up-regulated in renal cell carcinoma.

It localises to the nucleus. The protein localises to the nucleolus. The enzyme catalyses ATP + H2O = ADP + phosphate + H(+). Its function is as follows. May have DNA helicase activity and RNA helicase activity. Probably have ssDNA and RNA dependent ATPase activity. Plays a role in ribosome biogenesis and TP53/p53 regulation through its interaction with NPM1. This chain is ATP-dependent DNA helicase DDX31, found in Homo sapiens (Human).